Here is a 238-residue protein sequence, read N- to C-terminus: Serine protease SplE (238 aa).

An N-terminal signal peptide occupies residues Met1–Ala36. Catalysis depends on charge relay system residues His75, Asp113, and Ser191.

It belongs to the peptidase S1B family.

It is found in the secreted. This Staphylococcus aureus protein is Serine protease SplE (splE).